Reading from the N-terminus, the 324-residue chain is Acetaldehyde dehydrogenase 1 (324 aa).

Residue 18 to 21 participates in NAD(+) binding; that stretch reads SGNI. Cys136 serves as the catalytic Acyl-thioester intermediate. NAD(+) is bound by residues 167-175 and Asn297; that span reads SAGPGTRAN.

The protein belongs to the acetaldehyde dehydrogenase family.

It catalyses the reaction acetaldehyde + NAD(+) + CoA = acetyl-CoA + NADH + H(+). The chain is Acetaldehyde dehydrogenase 1 from Parafrankia sp. (strain EAN1pec).